We begin with the raw amino-acid sequence, 348 residues long: UDP-3-O-acylglucosamine N-acyltransferase (348 aa).

H257 functions as the Proton acceptor in the catalytic mechanism.

The protein belongs to the transferase hexapeptide repeat family. LpxD subfamily. Homotrimer.

It carries out the reaction a UDP-3-O-[(3R)-3-hydroxyacyl]-alpha-D-glucosamine + a (3R)-hydroxyacyl-[ACP] = a UDP-2-N,3-O-bis[(3R)-3-hydroxyacyl]-alpha-D-glucosamine + holo-[ACP] + H(+). It functions in the pathway bacterial outer membrane biogenesis; LPS lipid A biosynthesis. Catalyzes the N-acylation of UDP-3-O-acylglucosamine using 3-hydroxyacyl-ACP as the acyl donor. Is involved in the biosynthesis of lipid A, a phosphorylated glycolipid that anchors the lipopolysaccharide to the outer membrane of the cell. This Bartonella quintana (strain Toulouse) (Rochalimaea quintana) protein is UDP-3-O-acylglucosamine N-acyltransferase.